Reading from the N-terminus, the 325-residue chain is MTGTVYKSTGSWYTVKSEKGDFVECRMKGKFRIKGIKSTNPIAVGDIVDYELDETSDAVTGTIHTIHERKNYIVRKSVNLSKQIHIIASNIDQVFLLVTIDNPPTTTSFIDRFLVTAEAYGIEAILIFNKIDTLNEQTLDDQLYLQHIYTEIGYKCLRISSTENKGVDKLKEMMVGKVSMFSGHSGVGKSTLVNAMEPSLHLKTSVISEQSKQGQHTTTFAEMYDLSFDARIIDTPGIKGFGIVDMEPTEISGYFPEFFKLKDQCKFNNCLHKEEPHCAIKAALEKDEIAWSRYNSYLKILEGDEEHYRTDIYGEDRAASDETRK.

Residues 80 to 241 (LSKQIHIIAS…IIDTPGIKGF (162 aa)) enclose the CP-type G domain. Residues 129-132 (NKID) and 183-191 (GHSGVGKST) contribute to the GTP site. Zn(2+) is bound by residues cysteine 265, cysteine 270, histidine 272, and cysteine 278.

The protein belongs to the TRAFAC class YlqF/YawG GTPase family. RsgA subfamily. As to quaternary structure, monomer. Associates with 30S ribosomal subunit, binds 16S rRNA. It depends on Zn(2+) as a cofactor.

It localises to the cytoplasm. Functionally, one of several proteins that assist in the late maturation steps of the functional core of the 30S ribosomal subunit. Helps release RbfA from mature subunits. May play a role in the assembly of ribosomal proteins into the subunit. Circularly permuted GTPase that catalyzes slow GTP hydrolysis, GTPase activity is stimulated by the 30S ribosomal subunit. The chain is Small ribosomal subunit biogenesis GTPase RsgA from Flavobacterium johnsoniae (strain ATCC 17061 / DSM 2064 / JCM 8514 / BCRC 14874 / CCUG 350202 / NBRC 14942 / NCIMB 11054 / UW101) (Cytophaga johnsonae).